Reading from the N-terminus, the 129-residue chain is Small ribosomal subunit protein uS11 (129 aa).

It belongs to the universal ribosomal protein uS11 family. As to quaternary structure, part of the 30S ribosomal subunit. Interacts with proteins S7 and S18. Binds to IF-3.

Located on the platform of the 30S subunit, it bridges several disparate RNA helices of the 16S rRNA. Forms part of the Shine-Dalgarno cleft in the 70S ribosome. This chain is Small ribosomal subunit protein uS11, found in Bartonella tribocorum (strain CIP 105476 / IBS 506).